The following is a 445-amino-acid chain: 3-phosphoshikimate 1-carboxyvinyltransferase (445 aa).

3-phosphoshikimate is bound by residues K25, S26, and R30. Position 25 (K25) interacts with phosphoenolpyruvate. Phosphoenolpyruvate is bound by residues G98 and R126. The 3-phosphoshikimate site is built by S171, Q173, D324, and K351. Q173 lines the phosphoenolpyruvate pocket. D324 serves as the catalytic Proton acceptor. Residues R355 and R398 each coordinate phosphoenolpyruvate.

This sequence belongs to the EPSP synthase family. In terms of assembly, monomer.

It is found in the cytoplasm. It catalyses the reaction 3-phosphoshikimate + phosphoenolpyruvate = 5-O-(1-carboxyvinyl)-3-phosphoshikimate + phosphate. The protein operates within metabolic intermediate biosynthesis; chorismate biosynthesis; chorismate from D-erythrose 4-phosphate and phosphoenolpyruvate: step 6/7. Its function is as follows. Catalyzes the transfer of the enolpyruvyl moiety of phosphoenolpyruvate (PEP) to the 5-hydroxyl of shikimate-3-phosphate (S3P) to produce enolpyruvyl shikimate-3-phosphate and inorganic phosphate. The chain is 3-phosphoshikimate 1-carboxyvinyltransferase from Hydrogenovibrio crunogenus (strain DSM 25203 / XCL-2) (Thiomicrospira crunogena).